Consider the following 533-residue polypeptide: tRNA(Ile)-lysidine synthase (533 aa).

Residue 21–26 (SGGADS) coordinates ATP. The CMP/dCMP-type deaminase domain maps to 377–500 (DLLDTAMGEA…DLLSSHWGHV (124 aa)).

This sequence belongs to the tRNA(Ile)-lysidine synthase family.

Its subcellular location is the cytoplasm. The enzyme catalyses cytidine(34) in tRNA(Ile2) + L-lysine + ATP = lysidine(34) in tRNA(Ile2) + AMP + diphosphate + H(+). Ligates lysine onto the cytidine present at position 34 of the AUA codon-specific tRNA(Ile) that contains the anticodon CAU, in an ATP-dependent manner. Cytidine is converted to lysidine, thus changing the amino acid specificity of the tRNA from methionine to isoleucine. This is tRNA(Ile)-lysidine synthase from Deinococcus deserti (strain DSM 17065 / CIP 109153 / LMG 22923 / VCD115).